The sequence spans 554 residues: 3-(3-hydroxy-phenyl)propionate/3-hydroxycinnamic acid hydroxylase (554 aa).

Residues Gln17 to Lys46 and Phe285 to Asp295 contribute to the FAD site.

The protein belongs to the PheA/TfdB FAD monooxygenase family. FAD is required as a cofactor.

It catalyses the reaction 3-(3-hydroxyphenyl)propanoate + NADH + O2 + H(+) = 3-(2,3-dihydroxyphenyl)propanoate + NAD(+) + H2O. It carries out the reaction (2E)-3-(3-hydroxyphenyl)prop-2-enoate + NADH + O2 + H(+) = (2E)-3-(2,3-dihydroxyphenyl)prop-2-enoate + NAD(+) + H2O. The protein operates within aromatic compound metabolism; 3-phenylpropanoate degradation. Functionally, catalyzes the insertion of one atom of molecular oxygen into position 2 of the phenyl ring of 3-(3-hydroxyphenyl)propionate (3-HPP) and hydroxycinnamic acid (3HCI). This chain is 3-(3-hydroxy-phenyl)propionate/3-hydroxycinnamic acid hydroxylase, found in Escherichia coli O17:K52:H18 (strain UMN026 / ExPEC).